Consider the following 250-residue polypeptide: Kallikrein-14 (250 aa).

The signal sequence occupies residues 1-18; it reads MFLLLIILQALAVAIAQS. Positions 19–23 are cleaved as a propeptide — activation peptide; the sequence is QGDHK. The Peptidase S1 domain maps to 24–248; that stretch reads IIGGYRCVRN…YHSWIQRTMQ (225 aa). Cys51 and Cys67 are oxidised to a cystine. Residues His66 and Asp110 each act as charge relay system in the active site. Intrachain disulfides connect Cys142–Cys209, Cys174–Cys188, and Cys199–Cys224. The active-site Charge relay system is Ser203.

Belongs to the peptidase S1 family. Kallikrein subfamily. In terms of processing, proteolytic cleavage of the activation peptide produces the active enzyme.

Its subcellular location is the secreted. It localises to the extracellular space. With respect to regulation, inhibited by SERPINA1, SERPINC1, SERPINE1, SERPINF2, aprotinin, soybean, trypsin inhibitor and leupeptin. Inhibited by serine protease inhibitor SPINK5. Has an autoproteolytic activity which may have a regulatory effect. Activated by citrate and inhibited by zinc and to a lower extent by manganese. Its function is as follows. Serine-type endopeptidase with a dual trypsin-like and chymotrypsin-like substrate specificity. May activate/inactivate the proteinase-activated receptors F2R, F2RL1 and F2RL3 and other kallikreins including KLK1, KLK3, KLK5 and KLK11. May function in seminal clot liquefaction through direct cleavage of the semenogelin SEMG1 and SEMG2 and activation of KLK3. May function through desmoglein DSG1 cleavage in epidermal desquamation a process by which the most superficial corneocytes are shed from the skin surface. May be involved in several aspects of tumor progression including growth, invasion and angiogenesis. This Mus musculus (Mouse) protein is Kallikrein-14 (Klk14).